A 456-amino-acid chain; its full sequence is Methylenetetrahydrofolate--tRNA-(uracil-5-)-methyltransferase TrmFO (456 aa).

11-16 (GAGLAG) contributes to the FAD binding site.

The protein belongs to the MnmG family. TrmFO subfamily. It depends on FAD as a cofactor.

It is found in the cytoplasm. It carries out the reaction uridine(54) in tRNA + (6R)-5,10-methylene-5,6,7,8-tetrahydrofolate + NADH + H(+) = 5-methyluridine(54) in tRNA + (6S)-5,6,7,8-tetrahydrofolate + NAD(+). It catalyses the reaction uridine(54) in tRNA + (6R)-5,10-methylene-5,6,7,8-tetrahydrofolate + NADPH + H(+) = 5-methyluridine(54) in tRNA + (6S)-5,6,7,8-tetrahydrofolate + NADP(+). Functionally, catalyzes the folate-dependent formation of 5-methyl-uridine at position 54 (M-5-U54) in all tRNAs. This Synechococcus sp. (strain CC9605) protein is Methylenetetrahydrofolate--tRNA-(uracil-5-)-methyltransferase TrmFO.